We begin with the raw amino-acid sequence, 180 residues long: Nucleoside-triphosphatase THEP1 (180 aa).

ATP contacts are provided by residues 18 to 25 (GRPGVGKT) and 104 to 111 (LVIMDEIG).

The protein belongs to the THEP1 NTPase family.

The enzyme catalyses a ribonucleoside 5'-triphosphate + H2O = a ribonucleoside 5'-diphosphate + phosphate + H(+). In terms of biological role, has nucleotide phosphatase activity towards ATP, GTP, CTP, TTP and UTP. May hydrolyze nucleoside diphosphates with lower efficiency. This Metallosphaera sedula (strain ATCC 51363 / DSM 5348 / JCM 9185 / NBRC 15509 / TH2) protein is Nucleoside-triphosphatase THEP1.